The chain runs to 128 residues: Small ribosomal subunit protein uS12 (128 aa).

Positions 1 to 30 are disordered; sequence MPTINQLIRKGREPKERKSKSPALMGNPQK. The residue at position 89 (aspartate 89) is a 3-methylthioaspartic acid. The segment at 106–128 is disordered; the sequence is GVEGRKQGRSKYGTKRPKEGGKK.

Belongs to the universal ribosomal protein uS12 family. In terms of assembly, part of the 30S ribosomal subunit. Contacts proteins S8 and S17. May interact with IF1 in the 30S initiation complex.

With S4 and S5 plays an important role in translational accuracy. Functionally, interacts with and stabilizes bases of the 16S rRNA that are involved in tRNA selection in the A site and with the mRNA backbone. Located at the interface of the 30S and 50S subunits, it traverses the body of the 30S subunit contacting proteins on the other side and probably holding the rRNA structure together. The combined cluster of proteins S8, S12 and S17 appears to hold together the shoulder and platform of the 30S subunit. The chain is Small ribosomal subunit protein uS12 from Dictyoglomus thermophilum (strain ATCC 35947 / DSM 3960 / H-6-12).